The following is a 354-amino-acid chain: Phosphate acyltransferase (354 aa).

Belongs to the PlsX family. In terms of assembly, homodimer. Probably interacts with PlsY.

The protein localises to the cytoplasm. It carries out the reaction a fatty acyl-[ACP] + phosphate = an acyl phosphate + holo-[ACP]. The protein operates within lipid metabolism; phospholipid metabolism. Functionally, catalyzes the reversible formation of acyl-phosphate (acyl-PO(4)) from acyl-[acyl-carrier-protein] (acyl-ACP). This enzyme utilizes acyl-ACP as fatty acyl donor, but not acyl-CoA. This is Phosphate acyltransferase from Bordetella petrii (strain ATCC BAA-461 / DSM 12804 / CCUG 43448).